Consider the following 144-residue polypeptide: Large ribosomal subunit protein uL15 (144 aa).

Residues 1–48 are disordered; sequence MQLNNLKPADGSKHAKRRVGRGIGSGLGKTAGRGHKGQKSRSGGFHKV. The span at 21-31 shows a compositional bias: gly residues; sequence RGIGSGLGKTA.

The protein belongs to the universal ribosomal protein uL15 family. As to quaternary structure, part of the 50S ribosomal subunit.

Binds to the 23S rRNA. This Cupriavidus metallidurans (strain ATCC 43123 / DSM 2839 / NBRC 102507 / CH34) (Ralstonia metallidurans) protein is Large ribosomal subunit protein uL15.